The sequence spans 133 residues: Small ribosomal subunit protein uS9 (133 aa).

The protein belongs to the universal ribosomal protein uS9 family.

The protein is Small ribosomal subunit protein uS9 of Ureaplasma parvum serovar 3 (strain ATCC 700970).